The primary structure comprises 1013 residues: MGDKKDDKSSPKKSKAKERRDLDDLKKEVAMTEHKMSVEEVCRKYNTDCVQGLTHSKAQEILARDGPNALTPPPTTPEWVKFCRQLFGGFSILLWIGAILCFLAYGIQAGTEDDPSGDNLYLGIVLAAVVIITGCFSYYQEAKSSKIMESFKNMVPQQALVIREGEKMQVNAEEVVVGDLVEIKGGDRVPADLRIISAHGCKVDNSSLTGESEPQTRSPDCTHDNPLETRNITFFSTNCVEGTARGVVVATGDRTVMGRIATLASGLEVGKTPIAIEIEHFIQLITGVAVFLGVSFFILSLILGYTWLEAVIFLIGIIVANVPEGLLATVTVCLTLTAKRMARKNCLVKNLEAVETLGSTSTICSDKTGTLTQNRMTVAHMWFDNQIHEADTTEDQSGTSFDKSSHTWVALSHIAGLCNRAVFKGGQDNIPVLKRDVAGDASESALLKCIELSSGSVKLMRERNKKVAEIPFNSTNKYQLSIHETEDPNDNRYLLVMKGAPERILDRCATILLQGKEQPLDEEMKEAFQNAYLELGGLGERVLGFCHYYLPEEQFPKGFAFDCDDVNFTTDNLCFVGLMSMIDPPRAAVPDAVGKCRSAGIKVIMVTGDHPITAKAIAKGVGIISEGNETVEDIAARLNIPVSQVNPRDAKACVIHGTDLKDFTSEQIDEILQNHTEIVFARTSPQQKLIIVEGCQRQGAIVAVTGDGVNDSPALKKADIGVAMGIAGSDVSKQAADMILLDDNFASIVTGVEEGRLIFDNLKKSIAYTLTSNIPEITPFLLFIMANIPLPLGTITILCIDLGTDMVPAISLAYEAAESDIMKRQPRNPRTDKLVNERLISMAYGQIGMIQALGGFFSYFVILAENGFLPGNLVGIRLNWDDRTVNDLEDSYGQQWTYEQRKVVEFTCHTAFFVSIVVVQWADLIICKTRRNSVFQQGMKNKILIFGLFEETALAAFLSYCPGMDVALRMYPLKPSWWFCAFPYSFLIFVYDEIRKLILRRNPGGWVEKETYY.

Residues 1 to 10 are compositionally biased toward basic and acidic residues; it reads MGDKKDDKSS. Residues 1 to 24 are disordered; that stretch reads MGDKKDDKSSPKKSKAKERRDLDD. The Cytoplasmic segment spans residues 1 to 77; sequence MGDKKDDKSS…NALTPPPTTP (77 aa). Residues S37 and S56 each carry the phosphoserine modification. Residues 72-74 are interaction with phosphoinositide-3 kinase; the sequence is PPP. A helical transmembrane segment spans residues 78–98; it reads EWVKFCRQLFGGFSILLWIGA. Residues 99-121 lie on the Extracellular side of the membrane; that stretch reads ILCFLAYGIQAGTEDDPSGDNLY. Residues 122–142 traverse the membrane as a helical segment; the sequence is LGIVLAAVVIITGCFSYYQEA. Residues 143 to 278 lie on the Cytoplasmic side of the membrane; it reads KSSKIMESFK…VGKTPIAIEI (136 aa). S218 and S265 each carry phosphoserine. Residues 279 to 298 traverse the membrane as a helical segment; sequence EHFIQLITGVAVFLGVSFFI. The Extracellular portion of the chain corresponds to 299–310; sequence LSLILGYTWLEA. A helical membrane pass occupies residues 311-328; sequence VIFLIGIIVANVPEGLLA. Topologically, residues 329–762 are cytoplasmic; that stretch reads TVTVCLTLTA…EEGRLIFDNL (434 aa). The active-site 4-aspartylphosphate intermediate is the D366. At S442 the chain carries Phosphoserine. Y548 carries the phosphotyrosine modification. 2 residues coordinate Mg(2+): D707 and D711. A helical membrane pass occupies residues 763-782; the sequence is KKSIAYTLTSNIPEITPFLL. Residues 783-792 lie on the Extracellular side of the membrane; it reads FIMANIPLPL. The chain crosses the membrane as a helical span at residues 793–813; that stretch reads GTITILCIDLGTDMVPAISLA. Residues 814 to 833 are Cytoplasmic-facing; it reads YEAAESDIMKRQPRNPRTDK. Residues 834–856 traverse the membrane as a helical segment; sequence LVNERLISMAYGQIGMIQALGGF. Residues 857–908 lie on the Extracellular side of the membrane; the sequence is FSYFVILAENGFLPGNLVGIRLNWDDRTVNDLEDSYGQQWTYEQRKVVEFTC. A helical membrane pass occupies residues 909-928; sequence HTAFFVSIVVVQWADLIICK. Residues 929 to 941 lie on the Cytoplasmic side of the membrane; that stretch reads TRRNSVFQQGMKN. S933 carries the post-translational modification Phosphoserine; by PKA. A helical membrane pass occupies residues 942–960; sequence KILIFGLFEETALAAFLSY. The Extracellular portion of the chain corresponds to 961–975; sequence CPGMDVALRMYPLKP. The helical transmembrane segment at 976–996 threads the bilayer; sequence SWWFCAFPYSFLIFVYDEIRK. Topologically, residues 997 to 1013 are cytoplasmic; the sequence is LILRRNPGGWVEKETYY.

This sequence belongs to the cation transport ATPase (P-type) (TC 3.A.3) family. Type IIC subfamily. As to quaternary structure, the sodium/potassium-transporting ATPase is composed of a catalytic alpha subunit, an auxiliary non-catalytic beta subunit and an additional regulatory subunit. Interacts with regulatory subunit FXYD1.

It is found in the cell membrane. It catalyses the reaction K(+)(out) + Na(+)(in) + ATP + H2O = K(+)(in) + Na(+)(out) + ADP + phosphate + H(+). Functionally, this is the catalytic component of the active enzyme, which catalyzes the hydrolysis of ATP coupled with the exchange of sodium and potassium ions across the plasma membrane. This action creates the electrochemical gradient of sodium and potassium ions, providing the energy for active transport of various nutrients. The sequence is that of Sodium/potassium-transporting ATPase subunit alpha-3 (Atp1a3) from Mus musculus (Mouse).